A 372-amino-acid chain; its full sequence is MGNSYITKEDNQISATSEQTEDSACLSAMVLTTNLVYPAVLNAAIDLNLFEIIAKATPPGAFMSPSEIASKLPASTQHSDLPNRLDRMLRLLASYSVLTSTTRTIEDGGAERVYGLSMVGKYLVPDESRGYLASFTTFLCYPALLQVWMNFKEAVVDEDIDLFKNVHGVTKYEFMGKDKKMNQIFNKSMVDVCATEMKRMLEIYTGFEGISTLVDVGGGSGRNLELIISKYPLIKGINFDLPQVIENAPPLSGIEHVGGDMFASVPQGDAMILKAVCHNWSDEKCIEFLSNCHKALSPNGKVIIVEFILPEEPNTSEESKLVSTLDNLMFITVGGRERTEKQYEKLSKLSGFSKFQVACRAFNSLGVMEFYK.

S-adenosyl-L-methionine contacts are provided by Gly-217, Asp-240, Asp-260, Met-261, and Lys-274. The active-site Proton acceptor is His-278.

This sequence belongs to the class I-like SAM-binding methyltransferase superfamily. Cation-independent O-methyltransferase family. COMT subfamily. Monomer. Homodimer. In terms of tissue distribution, roots (at protein level). Expressed mainly in roots, and to a lesser extent in root nodules. In the roots, expression is not detected in the root tip or the cells immediately behind the tip, but is detected in tissues starting 1.5-2.0 mm distal to the root tip. Detected in the epidermal and cortical cells of 2 day old roots, with lower levels in vascular tissue.

The catalysed reaction is isoliquiritigenin + S-adenosyl-L-methionine = 2'-O-methylisoliquiritigenin + S-adenosyl-L-homocysteine + H(+). The enzyme catalyses licodione + S-adenosyl-L-methionine = 2'-O-methyllicodione + S-adenosyl-L-homocysteine + H(+). With respect to regulation, inhibited by 1 mM Co(2+), Cu(2+), Zn(2+) or Fe(2+). Non-competitively inhibited by S-adenosyl-L-homocysteine. Competitively inhibited by 2'-O-methylisoliquiritigenin. Functionally, methylates the 2'-hydroxyl of isoliquiritigenin and licodione. Does not methylate narigenin chalcone, caffeic acid or daidzein. Involved in the root nodulation initiation by promoting the biosynthesis of nod-inducing molecules. This is Isoliquiritigenin 2'-O-methyltransferase from Medicago sativa (Alfalfa).